Reading from the N-terminus, the 500-residue chain is Cytochrome P450 2D16 (500 aa).

Position 249 is a phosphoserine (Ser-249). Residue Cys-446 coordinates heme.

It belongs to the cytochrome P450 family. Heme is required as a cofactor. In terms of tissue distribution, expressed at high levels in the inner zone of the adrenal cortex.

It localises to the endoplasmic reticulum membrane. Its subcellular location is the microsome membrane. The catalysed reaction is an organic molecule + reduced [NADPH--hemoprotein reductase] + O2 = an alcohol + oxidized [NADPH--hemoprotein reductase] + H2O + H(+). In terms of biological role, cytochromes P450 are a group of heme-thiolate monooxygenases. In liver microsomes, this enzyme is involved in an NADPH-dependent electron transport pathway. It oxidizes a variety of structurally unrelated compounds, including steroids, fatty acids, and xenobiotics. This Cavia porcellus (Guinea pig) protein is Cytochrome P450 2D16 (CYP2D16).